Consider the following 338-residue polypeptide: MTKMYYEEDTDLNLLKGKTIAVIGYGSQGHAHALNAKESGGNVIIGLYEGSKSWAKAEAQGFEVFSTAEAAKKADIIMILINDELQAAMYKKDIAPNLEAGNMLMFAHGFNIHFDQITAPNDVDVTMIAPKGPGHTVRSEYQLGKGVPCLVAVHQDATGRALETALAYANAIGGARAGVLETTFRTETETDLFGEQAVLCGGVCALMQAGFETLVEAGYDERNAYFECIHEMKLIVDLIYQSGFAGMRYSISNTAEYGDYITGSKIITEETKKTMKKVLKDIQDGTFAKDFLLDMSEAGGQAHFKAMRKLAAEHQSEAVGSEIRKLYCWNNEDKLINN.

In terms of domain architecture, KARI N-terminal Rossmann spans 2 to 182 (TKMYYEEDTD…GGARAGVLET (181 aa)). NADP(+) contacts are provided by residues 25–28 (YGSQ), Ser-51, Ser-53, and 83–86 (DELQ). Residue His-108 is part of the active site. Position 134 (Gly-134) interacts with NADP(+). Residues 183–330 (TFRTETETDL…SEIRKLYCWN (148 aa)) enclose the KARI C-terminal knotted domain. The Mg(2+) site is built by Asp-191, Glu-195, Glu-227, and Glu-231. Ser-252 provides a ligand contact to substrate.

Belongs to the ketol-acid reductoisomerase family. It depends on Mg(2+) as a cofactor.

The enzyme catalyses (2R)-2,3-dihydroxy-3-methylbutanoate + NADP(+) = (2S)-2-acetolactate + NADPH + H(+). It carries out the reaction (2R,3R)-2,3-dihydroxy-3-methylpentanoate + NADP(+) = (S)-2-ethyl-2-hydroxy-3-oxobutanoate + NADPH + H(+). It participates in amino-acid biosynthesis; L-isoleucine biosynthesis; L-isoleucine from 2-oxobutanoate: step 2/4. It functions in the pathway amino-acid biosynthesis; L-valine biosynthesis; L-valine from pyruvate: step 2/4. In terms of biological role, involved in the biosynthesis of branched-chain amino acids (BCAA). Catalyzes an alkyl-migration followed by a ketol-acid reduction of (S)-2-acetolactate (S2AL) to yield (R)-2,3-dihydroxy-isovalerate. In the isomerase reaction, S2AL is rearranged via a Mg-dependent methyl migration to produce 3-hydroxy-3-methyl-2-ketobutyrate (HMKB). In the reductase reaction, this 2-ketoacid undergoes a metal-dependent reduction by NADPH to yield (R)-2,3-dihydroxy-isovalerate. The sequence is that of Ketol-acid reductoisomerase (NADP(+)) from Clostridium botulinum (strain Eklund 17B / Type B).